Consider the following 1526-residue polypeptide: DNA topoisomerase 2-alpha (1526 aa).

Methionine 1 carries the N-acetylmethionine modification. Residues 1–21 (MELSPLQPVNENMQMNKKKNE) are disordered. Serine 4 is subject to Phosphoserine. Lysine 17 is covalently cross-linked (Glycyl lysine isopeptide (Lys-Gly) (interchain with G-Cter in SUMO2)). Residues asparagine 90, asparagine 119, and 147–149 (SSN) each bind ATP. Residues lysine 155 and lysine 156 each participate in a glycyl lysine isopeptide (Lys-Gly) (interchain with G-Cter in SUMO2) cross-link. ATP is bound at residue 160–167 (GRNGYGAK). Lysine 260 participates in a covalent cross-link: Glycyl lysine isopeptide (Lys-Gly) (interchain with G-Cter in SUMO2). Threonine 281 bears the Phosphothreonine mark. The segment at 341–343 (KKK) is interaction with DNA. Residue lysine 351 forms a Glycyl lysine isopeptide (Lys-Gly) (interchain with G-Cter in SUMO2) linkage. 375–377 (QTK) contacts ATP. Residues lysine 385, lysine 396, lysine 415, lysine 417, lysine 424, and lysine 439 each participate in a glycyl lysine isopeptide (Lys-Gly) (interchain with G-Cter in SUMO2) cross-link. Residues 454–571 (CTLILTEGDS…SLLRHRFLEE (118 aa)) form the Toprim domain. Glutamate 460 provides a ligand contact to Mg(2+). Glycyl lysine isopeptide (Lys-Gly) (interchain with G-Cter in SUMO2) cross-links involve residues lysine 465, lysine 479, and lysine 528. Residues aspartate 540 and aspartate 542 each coordinate Mg(2+). Glycyl lysine isopeptide (Lys-Gly) (interchain with G-Cter in SUMO2) cross-links involve residues lysine 583, lysine 598, lysine 613, lysine 621, lysine 624, lysine 631, lysine 638, lysine 654, lysine 661, and lysine 675. The Topo IIA-type catalytic domain maps to 714–1166 (IPSMVDGLKP…SPSDLWKEDL (453 aa)). Tyrosine 804 serves as the catalytic O-(5'-phospho-DNA)-tyrosine intermediate. The interaction with DNA stretch occupies residues 989 to 998 (KLQTSLTCNS). Lysine 1074 participates in a covalent cross-link: Glycyl lysine isopeptide (Lys-Gly) (interchain with G-Cter in SUMO2). Disordered stretches follow at residues 1089-1117 (WKEAQQKVPDEEENEESDNENSDSVAESG) and 1180-1217 (EKQDEQVGLPGKGGKAKGKKAQMSEVLPSPHGKRVIPQ). The span at 1098–1109 (DEEENEESDNEN) shows a compositional bias: acidic residues. Phosphoserine; by CK1 is present on serine 1105. Glycyl lysine isopeptide (Lys-Gly) (interchain with G-Cter in SUMO2) cross-links involve residues lysine 1191 and lysine 1199. Serine 1208 is modified (phosphoserine). A Glycyl lysine isopeptide (Lys-Gly) (interchain with G-Cter in SUMO2) cross-link involves residue lysine 1223. A disordered region spans residues 1233-1526 (KIKSENVEGT…LEESDDDDLF (294 aa)). Lysine 1235 is covalently cross-linked (Glycyl lysine isopeptide (Lys-Gly) (interchain with G-Cter in SUMO1); alternate). Lysine 1235 is covalently cross-linked (Glycyl lysine isopeptide (Lys-Gly) (interchain with G-Cter in SUMO2); alternate). Threonine 1242 is subject to Phosphothreonine. A Glycyl lysine isopeptide (Lys-Gly) (interchain with G-Cter in SUMO2) cross-link involves residue lysine 1254. Residues 1255–1265 (QRIEKKQKKEP) are compositionally biased toward basic and acidic residues. Glycyl lysine isopeptide (Lys-Gly) (interchain with G-Cter in SUMO2) cross-links involve residues lysine 1271, lysine 1278, and lysine 1281. Phosphoserine is present on residues serine 1290, serine 1292, serine 1294, and serine 1297. Threonine 1322 is subject to Phosphothreonine. Residues 1325–1344 (LDSDEDFSGSDGKDEDEDFF) are compositionally biased toward acidic residues. A phosphoserine mark is found at serine 1327 and serine 1332. Threonine 1349 is subject to Phosphothreonine. Glycyl lysine isopeptide (Lys-Gly) (interchain with G-Cter in SUMO2) cross-links involve residues lysine 1358, lysine 1362, and lysine 1368. Residues serine 1369 and serine 1372 each carry the phosphoserine modification. A Glycyl lysine isopeptide (Lys-Gly) (interchain with G-Cter in SUMO2) cross-link involves residue lysine 1380. 2 positions are modified to phosphoserine: serine 1382 and serine 1386. Low complexity predominate over residues 1405–1426 (SKQTVAVKKTATKSQSSTSTAG). Lysine 1417 is covalently cross-linked (Glycyl lysine isopeptide (Lys-Gly) (interchain with G-Cter in SUMO2); alternate). Residue lysine 1417 is modified to N6-acetyllysine; alternate. An interaction with PLSCR1 region spans residues 1428–1434 (KKRAVPK). A Glycyl lysine isopeptide (Lys-Gly) (interchain with G-Cter in SUMO2); alternate cross-link involves residue lysine 1437. Lysine 1437 is modified (N6-acetyllysine; alternate). Glycyl lysine isopeptide (Lys-Gly) (interchain with G-Cter in SUMO2) cross-links involve residues lysine 1449 and lysine 1454. 4 positions are modified to phosphoserine: serine 1464, serine 1466, serine 1469, and serine 1471. Residues lysine 1479 and lysine 1487 each participate in a glycyl lysine isopeptide (Lys-Gly) (interchain with G-Cter in SUMO2) cross-link. Residues 1486-1497 (SKGENQDFRVDL) show a composition bias toward basic and acidic residues. At serine 1520 the chain carries Phosphoserine.

The protein belongs to the type II topoisomerase family. In terms of assembly, homodimer. Interacts with COPS5. Interacts with RECQL5; this stimulates DNA decatenation. Interacts with SETMAR; stimulates the topoisomerase activity. Interacts with DHX9; this interaction occurs in a E2 enzyme UBE2I- and RNA-dependent manner, negatively regulates DHX9-mediated double-stranded DNA and RNA duplex helicase activity and stimulates TOP2A-mediated supercoiled DNA relaxation activity. Interacts with HNRNPU (via C-terminus); this interaction protects the topoisomerase TOP2A from degradation and positively regulates the relaxation of supercoiled DNA in a RNA-dependent manner. Interacts with MCM3AP. Interacts with ERCC6. Interacts with PLSCR1. Interacts with GCNA; this interaction allows the resolution of topoisomerase II (TOP2A) DNA-protein cross-links. Interacts with POL1RA/RPA1 (via dock II) and UBTF in the context of Pol I complex; may assist Pol I transcription initiation by releasing supercoils occurring during DNA unwinding. Interacts with TPRN; TPRN interacts with a number of DNA damage response proteins, is recruited to sites of DNA damage and may play a role in DNA damage repair. Mg(2+) serves as cofactor. The cofactor is Mn(2+). Requires Ca(2+) as cofactor. Post-translationally, phosphorylation has no effect on catalytic activity. However, phosphorylation at Ser-1105 by CSNK1D/CK1 promotes DNA cleavable complex formation.

The protein localises to the cytoplasm. Its subcellular location is the nucleus. The protein resides in the nucleoplasm. It is found in the nucleolus. It carries out the reaction ATP-dependent breakage, passage and rejoining of double-stranded DNA.. Its function is as follows. Key decatenating enzyme that alters DNA topology by binding to two double-stranded DNA molecules, generating a double-stranded break in one of the strands, passing the intact strand through the broken strand, and religating the broken strand. May play a role in regulating the period length of BMAL1 transcriptional oscillation. This Cricetulus griseus (Chinese hamster) protein is DNA topoisomerase 2-alpha (TOP2A).